The primary structure comprises 108 residues: Class I hydrophobin 3 (108 aa).

A signal peptide spans 1–17 (MFFQTTIVAALAFLAVA). Cystine bridges form between C28–C87, C35–C81, C36–C69, and C88–C101. Residue N37 is glycosylated (N-linked (GlcNAc...) asparagine).

It belongs to the fungal hydrophobin family. In terms of assembly, self-assembles to form functional amyloid fibrils called rodlets. Self-assembly into fibrillar rodlets occurs spontaneously at hydrophobic:hydrophilic interfaces and the rodlets further associate laterally to form amphipathic monolayers.

It is found in the secreted. The protein resides in the cell wall. Aerial growth, conidiation, and dispersal of filamentous fungi in the environment rely upon a capability of their secreting small amphipathic proteins called hydrophobins (HPBs) with low sequence identity. Class I can self-assemble into an outermost layer of rodlet bundles on aerial cell surfaces, conferring cellular hydrophobicity that supports fungal growth, development and dispersal; whereas Class II form highly ordered films at water-air interfaces through intermolecular interactions but contribute nothing to the rodlet structure. Vmh3 is a class I hydrophobin that is essential for the maintenance of the surface hydrophobicity of the mycelium and might be involved in the development of fruiting bodies. Plays an important role in hyphal resistance against environmental stress. Necessary for the efficient biodegradation of lignin. This chain is Class I hydrophobin 3, found in Pleurotus ostreatus (Oyster mushroom).